The following is a 369-amino-acid chain: Velvet complex subunit B (369 aa).

Disordered regions lie at residues 1 to 54 (MYAV…STVH), 138 to 174 (SISTAMSSSYPPPPHPTSSDYPASYQTNPYGQPVGQP), and 346 to 369 (KDGVKGQGSRGRHSDEDDGLDNEY). Positions 13-27 (HPPPLSMDRIPPPST) are enriched in pro residues. The 293-residue stretch at 53 to 345 (VHDGRIWSLQ…ANQGIKIPIR (293 aa)) folds into the Velvet domain.

It belongs to the velvet family. VelB subfamily. As to quaternary structure, component of the heterotrimeric velvet complex composed of laeA, veA and velB; VeA acting as a bridging protein between laeA and velB. Interacts directly with veA. Forms a heterodimeric complex with vosA; the formation of the velB-vosA complex is light-dependent.

Its subcellular location is the nucleus. The protein resides in the cytoplasm. In terms of biological role, component of the velvet transcription factor complex that controls sexual/asexual developmental ratio in response to light, promoting sexual development in the darkness while stimulating asexual sporulation under illumination. The velvet complex acts as a global regulator for secondary metabolite gene expression. Component of the velB-VosA heterodimeric complex that plays a dual role in activating genes associated with spore maturation and repressing certain development-associated genes. The velB-VosA complex binds DNA through the DNA-binding domain of vosA that recognizes an 11-nucleotide consensus sequence 5'-CTGGCCGCGGC-3' consisting of two motifs in the promoters of key developmental regulatory genes. The vosA-velB complex binds to the beta-glucan synthase fksA gene promoter in asexual spores for repression. This Emericella nidulans (strain FGSC A4 / ATCC 38163 / CBS 112.46 / NRRL 194 / M139) (Aspergillus nidulans) protein is Velvet complex subunit B.